A 566-amino-acid chain; its full sequence is Intracellular exo-alpha-(1-&gt;5)-L-arabinofuranosidase (566 aa).

Over residues 1–12 the composition is skewed to polar residues; sequence MTTHNSQYSAET. A disordered region spans residues 1–39; the sequence is MTTHNSQYSAETTHPDKQESSPAPTAAGTTASNVSTTGN. Over residues 20–32 the composition is skewed to low complexity; sequence SSPAPTAAGTTAS. Alpha-L-arabinofuranose-binding residues include Glu69, Asn114, and Asn214. The active-site Proton donor/acceptor is Glu215. Positions 286, 340, and 409 each coordinate alpha-L-arabinofuranose. Residue Glu340 is the Nucleophile of the active site.

Belongs to the glycosyl hydrolase 51 family. As to quaternary structure, homohexamer; trimer of dimers.

It is found in the cytoplasm. It carries out the reaction Hydrolysis of terminal non-reducing alpha-L-arabinofuranoside residues in alpha-L-arabinosides.. Its pathway is glycan metabolism; L-arabinan degradation. Completely inhibited by Hg(2+) and Cu(2+) ions, whereas 1 mM Zn(2+) inhibited activity by 51%. Its function is as follows. Involved in the degradation of arabinan and is a key enzyme in the complete degradation of the plant cell wall. Catalyzes the cleavage of terminal alpha-(1-&gt;5)-arabinofuranosyl bonds in different hemicellulosic homopolysaccharides (branched and debranched arabinans). It is active with sugar beet arabinan and wheat arabinoxylan. It also exhibited activity against alpha-(1-&gt;5)-linked arabinobiose, arabinotriose, arabinotetraose, and arabinopentaose. This is Intracellular exo-alpha-(1-&gt;5)-L-arabinofuranosidase (abfB) from Bifidobacterium longum.